We begin with the raw amino-acid sequence, 780 residues long: ATP-dependent 6-phosphofructokinase, liver type (780 aa).

The residue at position 2 (A2) is an N-acetylalanine. The N-terminal catalytic PFK domain 1 stretch occupies residues 2–390 (AAVDLEKLRA…NWNIYKLLAH (389 aa)). Residues G25, 88–89 (RC), and 118–121 (GDGS) each bind ATP. Mg(2+) is bound at residue D119. Substrate is bound by residues 164 to 166 (SID), R201, 208 to 210 (MGR), E264, R292, and 298 to 301 (HVQR). D166 functions as the Proton acceptor in the catalytic mechanism. S377 bears the Phosphoserine mark. Positions 391-400 (QKPPKEKSNF) are interdomain linker. The interval 401-780 (SLAILNVGAP…RRTLSMDKGF (380 aa)) is C-terminal regulatory PFK domain 2. Residues R470, 527 to 531 (TISNN), R565, 572 to 574 (MGG), and E628 contribute to the beta-D-fructose 2,6-bisphosphate site. O-linked (GlcNAc) serine glycosylation is present at S529. Y640 is subject to Phosphotyrosine. Beta-D-fructose 2,6-bisphosphate-binding positions include R654, 660-663 (HLQQ), and R734. A Phosphoserine modification is found at S775.

Belongs to the phosphofructokinase type A (PFKA) family. ATP-dependent PFK group I subfamily. Eukaryotic two domain clade 'E' sub-subfamily. Homo- and heterotetramers. Phosphofructokinase (PFK) enzyme functions as a tetramer composed of different combinations of 3 types of subunits, called PFKM (M), PFKL (L) and PFKP (P). The composition of the PFK tetramer differs according to the tissue type it is present in. The kinetic and regulatory properties of the tetrameric enzyme are dependent on the subunit composition, hence can vary across tissues. The cofactor is Mg(2+). Post-translationally, glcNAcylation at Ser-529 by OGT decreases enzyme activity, leading to redirect glucose flux through the oxidative pentose phosphate pathway. Glycosylation is stimulated by both hypoxia and glucose deprivation.

It localises to the cytoplasm. The enzyme catalyses beta-D-fructose 6-phosphate + ATP = beta-D-fructose 1,6-bisphosphate + ADP + H(+). It functions in the pathway carbohydrate degradation; glycolysis; D-glyceraldehyde 3-phosphate and glycerone phosphate from D-glucose: step 3/4. With respect to regulation, allosterically activated by ADP, AMP, or fructose 2,6-bisphosphate, and allosterically inhibited by ATP or citrate. GlcNAcylation by OGT overcomes allosteric regulation. Catalyzes the phosphorylation of D-fructose 6-phosphate to fructose 1,6-bisphosphate by ATP, the first committing step of glycolysis. Negatively regulates the phagocyte oxidative burst in response to bacterial infection by controlling cellular NADPH biosynthesis and NADPH oxidase-derived reactive oxygen species. Upon macrophage activation, drives the metabolic switch toward glycolysis, thus preventing glucose turnover that produces NADPH via pentose phosphate pathway. The chain is ATP-dependent 6-phosphofructokinase, liver type (PFKL) from Pongo abelii (Sumatran orangutan).